The following is a 652-amino-acid chain: DNA ligase (652 aa).

NAD(+)-binding positions include 29–33 (DAEYD), 78–79 (SL), and Glu107. The N6-AMP-lysine intermediate role is filled by Lys109. The NAD(+) site is built by Arg130, Glu164, Lys278, and Lys302. Positions 395, 398, 413, and 418 each coordinate Zn(2+). Positions 577–652 (ADDAILSGKT…VKDEAWLLDL (76 aa)) constitute a BRCT domain.

This sequence belongs to the NAD-dependent DNA ligase family. LigA subfamily. The cofactor is Mg(2+). It depends on Mn(2+) as a cofactor.

It catalyses the reaction NAD(+) + (deoxyribonucleotide)n-3'-hydroxyl + 5'-phospho-(deoxyribonucleotide)m = (deoxyribonucleotide)n+m + AMP + beta-nicotinamide D-nucleotide.. In terms of biological role, DNA ligase that catalyzes the formation of phosphodiester linkages between 5'-phosphoryl and 3'-hydroxyl groups in double-stranded DNA using NAD as a coenzyme and as the energy source for the reaction. It is essential for DNA replication and repair of damaged DNA. This Streptococcus thermophilus (strain CNRZ 1066) protein is DNA ligase.